Here is a 62-residue protein sequence, read N- to C-terminus: Large ribosomal subunit protein eL37 (62 aa).

Zn(2+) is bound by residues cysteine 20, cysteine 23, cysteine 35, and cysteine 38. A C4-type zinc finger spans residues 20-38; sequence CRRCGRVSYNVKKGYCAAC.

It belongs to the eukaryotic ribosomal protein eL37 family. In terms of assembly, part of the 50S ribosomal subunit. Zn(2+) serves as cofactor.

Binds to the 23S rRNA. This Pyrococcus furiosus (strain ATCC 43587 / DSM 3638 / JCM 8422 / Vc1) protein is Large ribosomal subunit protein eL37.